The primary structure comprises 403 residues: Exodeoxyribonuclease 7 large subunit (403 aa).

Belongs to the XseA family. Heterooligomer composed of large and small subunits.

Its subcellular location is the cytoplasm. The enzyme catalyses Exonucleolytic cleavage in either 5'- to 3'- or 3'- to 5'-direction to yield nucleoside 5'-phosphates.. Bidirectionally degrades single-stranded DNA into large acid-insoluble oligonucleotides, which are then degraded further into small acid-soluble oligonucleotides. The chain is Exodeoxyribonuclease 7 large subunit from Clostridium botulinum (strain Okra / Type B1).